A 342-amino-acid chain; its full sequence is Deoxyguanosinetriphosphate triphosphohydrolase-like protein (342 aa).

Positions 75–190 (RLVHTLEVSQ…VRFADKIAYV (116 aa)) constitute an HD domain.

This sequence belongs to the dGTPase family. Type 2 subfamily.

In Clostridium perfringens (strain SM101 / Type A), this protein is Deoxyguanosinetriphosphate triphosphohydrolase-like protein.